A 282-amino-acid chain; its full sequence is MVPKFYKLSNGFKIPSIALGTYDIPRSQTAEIVYEGVKCGYRHFDTAVLYGNEKEVGDGIIKWLNEDPGNHKREEIFYTTKLWNSQNGYKRAKAAIRQCLNEVSGLQYIDLLLIHSPLEGSKLRLETWRAMQEAVDEGLVKSIGVSNYGKKHIDELLNWPELKHKPVVNQIEISPWIMRQELADYCKSKGLVVEAFAPLCHGYKMTNPDLLKVCKEVDRNPGQVLIRWSLQHGYLPLPKTKTVKRLEGNLAAYNFELSDEQMKFLDHPDAYEPTDWECTDAP.

The active-site Proton donor is Tyr-50. His-115 serves as a coordination point for substrate.

It belongs to the aldo/keto reductase family.

This is an uncharacterized protein from Saccharomyces cerevisiae (strain ATCC 204508 / S288c) (Baker's yeast).